A 539-amino-acid polypeptide reads, in one-letter code: Phosphatidylinositol 4-phosphate 5-kinase type-1 beta (539 aa).

Positions 1 to 21 are disordered; sequence MSSTAENGDAVPGKQNEEKTY. The PIPK domain occupies 25 to 395; it reads ASSAIKGAIQ…RFLKFMNSRV (371 aa). 3 positions are modified to phosphoserine: S445, S447, and S448.

In terms of assembly, interacts with RAC1, AJUBA, PLD1, PLD2 and ARF1.

It is found in the cytoplasm. Its subcellular location is the cytosol. It localises to the cell membrane. The protein resides in the endomembrane system. It carries out the reaction a 1,2-diacyl-sn-glycero-3-phospho-(1D-myo-inositol 4-phosphate) + ATP = a 1,2-diacyl-sn-glycero-3-phospho-(1D-myo-inositol-4,5-bisphosphate) + ADP + H(+). The enzyme catalyses 1-octadecanoyl-2-(5Z,8Z,11Z,14Z)-eicosatetraenoyl-sn-glycero-3-phospho-1D-myo-inositol 4-phosphate + ATP = 1-octadecanoyl-2-(5Z,8Z,11Z,14Z)-eicosatetraenoyl-sn-glycero-3-phospho-1D-myo-inositol 4,5-bisphosphate + ADP + H(+). The catalysed reaction is 1-octadecanoyl-2-(9Z)-octadecenoyl-sn-glycero-3-phospho-1D-myo-inositol 4-phosphate + ATP = 1-octadecanoyl-2-(9Z)-octadecenoyl-sn-glycero-3-phospho-1D-myo-inositol 4,5-bisphosphate + ADP + H(+). It catalyses the reaction 1-octadecanoyl-2-(9Z)-octadecenoyl-sn-glycero-3-phospho-1D-myo-inositol + ATP = 1-octadecanoyl-2-(9Z)-octadecenoyl-sn-glycero-3-phospho-1D-myo-inositol 5-phosphate + ADP + H(+). It carries out the reaction 1-octadecanoyl-2-(9Z,12Z)-octadecadienoyl-sn-glycero-3-phospho-1D-myo-inositol + ATP = 1-octadecanoyl-2-(9Z,12Z)-octadecadienoyl-sn-glycero-3-phospho-1D-myo-inositol 5-phosphate + ADP + H(+). The enzyme catalyses 1-octadecanoyl-2-(5Z,8Z,11Z,14Z-eicosatetraenoyl)-sn-glycero-3-phospho-(1D-myo-inositol) + ATP = 1-octadecanoyl-2-(5Z,8Z,11Z,14Z)-eicosatetraenoyl-sn-glycero-3-phospho-1D-myo-inositol 5-phosphate + ADP + H(+). The catalysed reaction is 1,2-di-(9Z,12Z)-octadecadienoyl-sn-glycero-3-phospho-1D-myo-inositol + ATP = 1,2-di(9Z,12Z)-octadecadienoyl-sn-glycero-3-phospho-1D-myo-inositol 5-phosphate + ADP + H(+). Functionally, catalyzes the phosphorylation of phosphatidylinositol 4-phosphate (PtdIns(4)P/PI4P) to form phosphatidylinositol 4,5-bisphosphate (PtdIns(4,5)P2/PIP2), a lipid second messenger that regulates several cellular processes such as signal transduction, vesicle trafficking, actin cytoskeleton dynamics, cell adhesion, and cell motility. PtdIns(4,5)P2 can directly act as a second messenger or can be utilized as a precursor to generate other second messengers: inositol 1,4,5-trisphosphate (IP3), diacylglycerol (DAG) or phosphatidylinositol-3,4,5-trisphosphate (PtdIns(3,4,5)P3/PIP3). Mediates RAC1-dependent reorganization of actin filaments. Contributes to the activation of phospholipase PLD2. Together with PIP5K1A, is required, after stimulation by G-protein coupled receptors, for the synthesis of IP3 that will induce stable platelet adhesion. The protein is Phosphatidylinositol 4-phosphate 5-kinase type-1 beta of Rattus norvegicus (Rat).